Reading from the N-terminus, the 665-residue chain is Adenylate cyclase 1 (665 aa).

The segment at 1-25 (MLQRSESGFKDIESMQDSNADKPSR) is disordered. Over residues 7 to 24 (SGFKDIESMQDSNADKPS) the composition is skewed to basic and acidic residues. The next 2 membrane-spanning stretches (helical) occupy residues 33-53 (SLLGLVMVAMLIVVSATLVGL) and 373-393 (AVSGAVVVVAVLLALVLAHLI). The region spanning 394–444 (TKSLNQLTDSANRLQDLDFATPIDVSSHVAEISTLNGAMNRARDAIFTFAL) is the HAMP domain. The region spanning 471-603 (TAMFTDIYDF…DTVNVASRLE (133 aa)) is the Guanylate cyclase domain. The Mg(2+) site is built by Asp476 and Asp520.

This sequence belongs to the adenylyl cyclase class-3 family. Requires Mg(2+) as cofactor.

Its subcellular location is the cell membrane. It catalyses the reaction ATP = 3',5'-cyclic AMP + diphosphate. Plays essential roles in regulation of cellular metabolism by catalyzing the synthesis of a second messenger, cAMP. The protein is Adenylate cyclase 1 (cya1) of Rhizobium meliloti (strain 1021) (Ensifer meliloti).